Consider the following 499-residue polypeptide: Cytochrome P450 76T24 (499 aa).

Residues 3–23 traverse the membrane as a helical segment; that stretch reads VDILLSLVLAFFGWAAIYFLT. 4 N-linked (GlcNAc...) asparagine glycosylation sites follow: asparagine 55, asparagine 76, asparagine 279, and asparagine 284. Cysteine 442 serves as a coordination point for heme.

Belongs to the cytochrome P450 family.

It is found in the membrane. This chain is Cytochrome P450 76T24, found in Catharanthus roseus (Madagascar periwinkle).